We begin with the raw amino-acid sequence, 238 residues long: Ribitol-5-phosphate cytidylyltransferase 1 (238 aa).

Residues 7 to 10 (LAGG) and 81 to 87 (GSDRNDT) each bind CTP.

It belongs to the IspD/TarI cytidylyltransferase family. TarI subfamily.

The enzyme catalyses D-ribitol 5-phosphate + CTP + H(+) = CDP-L-ribitol + diphosphate. The protein operates within cell wall biogenesis; poly(ribitol phosphate) teichoic acid biosynthesis. Its function is as follows. Catalyzes the transfer of the cytidylyl group of CTP to D-ribitol 5-phosphate. In Staphylococcus aureus (strain bovine RF122 / ET3-1), this protein is Ribitol-5-phosphate cytidylyltransferase 1.